A 424-amino-acid chain; its full sequence is Folate-like transporter 2 (424 aa).

Asn35 carries N-linked (GlcNAc...) asparagine glycosylation. The next 6 helical transmembrane spans lie at 48–68 (IWTYSYLITLIPAFLLTDVFL), 71–91 (PLLVFEAFSYFLCWVIFVFGK), 99–119 (LEVFYGWATATEIAYFAYIYV), 136–156 (ALLVGRFLAYALAQLLIGLNW), 164–184 (IISLVAMTIAVFLALILPGVE), and 233–253 (PLILKWSVWSALSSCIFYQVT). N-linked (GlcNAc...) asparagine glycosylation occurs at Asn254. The next 4 helical transmembrane spans lie at 299 to 319 (WGDLLLAVGSIGQAGLLFWMS), 324 to 344 (IVVLYLSYIFYRVIYQLTTTI), 361 to 381 (LFGINTFVALLLQSILTAVVI), and 392 to 412 (FVVYSCYHLVVAFGFAIIFGI).

Belongs to the reduced folate carrier (RFC) transporter (TC 2.A.48) family.

The protein localises to the membrane. Its function is as follows. Unlike folt-1, does not appear to act as a folate transporter. This chain is Folate-like transporter 2 (folt-2), found in Caenorhabditis elegans.